The chain runs to 85 residues: Alpha-mammal toxin AaH2 (85 aa).

The N-terminal stretch at 1 to 19 (MNYLVMISLALLFVTGVES) is a signal peptide. The 63-residue stretch at 21–83 (KDGYIVDDVN…VRTKGPGRCH (63 aa)) folds into the LCN-type CS-alpha/beta domain. Intrachain disulfides connect C31–C82, C35–C55, C41–C65, and C45–C67. H83 carries the histidine amide modification.

The protein belongs to the long (4 C-C) scorpion toxin superfamily. Sodium channel inhibitor family. Alpha subfamily. The amidation of His-83 is not necessary for toxicity. In terms of tissue distribution, expressed by the venom gland.

It is found in the secreted. Its function is as follows. Alpha toxin that binds voltage-independently at site-3 of sodium channels (Nav), inhibits the inactivation of the activated channels, and weakly inhibits activation, thereby blocking neuronal transmission. Inserts into voltage-sensing domain IV to stabilize a deactivated state, thereby preventing fast-inactivation. Principally slows the inactivation process of TTX-sensitive sodium channels. It is active on mammalian brain Nav1.2/SCN2A (EC(50)human=0.72 nM, EC(50)rat=2.6 nM), on rat skeletal muscle Nav1.4/SCN4A (EC(50)=2.2 nM), and on human neuronal Nav1.7/SCN9A (EC(50)=6.8-51.7 nM). In vivo, intraplantar injection into mice induces spontaneous pain responses. This is Alpha-mammal toxin AaH2 from Androctonus australis (Sahara scorpion).